The sequence spans 168 residues: Pleiotrophin (168 aa).

A signal peptide spans 1 to 32 (MQTPQFLQQRRKFAAAFLAFIFLLAVVDTAEA). 5 disulfides stabilise this stretch: C47–C76, C55–C85, C62–C89, C99–C131, and C109–C141. Chondroitin sulfate binding stretches follow at residues 92 to 99 (KKQFGAEC) and 123 to 131 (KRALHNADC). The tract at residues 139-168 (KPCGKVTKPKPQAESKKKKKEGKKQEKMLD) is disordered. The segment at 147-168 (PKPQAESKKKKKEGKKQEKMLD) is chondroitin sulfate A binding.

This sequence belongs to the pleiotrophin family. In terms of assembly, interacts with ALK and NEK6. Interacts with PTPRZ1 (via chondroitin sulfate groups); promotes formation of homooligomers; oligomerization impairs tyrosine phosphatase activity. Forms a complex with PTPRZ1 and CTNNB1; this complex inactivates PTPRZ1 protein tyrosine phosphatase activity through PTN interaction and stimulates tyrosine phosphorylation of CTNNB1. Interacts with ITGB3 and ITGA5. Forms a complex with PTPRZ1 and integrin alpha-V/beta-3 (ITGAV:ITGB3) that stimulates endothelial cell migration through ITGB3 'Tyr-773' phosphorylation. Interacts with SDC3 (via heparan sulfate chains); this interaction mediates the neurite outgrowth-promoting signal from PTN to the cytoskeleton of growing neurites; this interaction mediates osteoblast recruitment. Interacts with GPC2 (via heparan sulfate); this interaction promotes neurite outgrowth through binding of PTN with chondroitin sulfate of proteoglycans, thereby releasing PTPRS of chondroitin sulfate proteoglycans (CSPGs) and leading to binding with heparan sulfate of GPC2. In terms of processing, phosphorylated by NEK6.

The protein localises to the secreted. Secreted growth factor that mediates its signal through cell-surface proteoglycan and non-proteoglycan receptors. Binds cell-surface proteoglycan receptor via their chondroitin sulfate (CS) groups. Thereby regulates many processes like cell proliferation, cell survival, cell growth, cell differentiation and cell migration in several tissues namely neuron and bone. Also plays a role in synaptic plasticity and learning-related behavior by inhibiting long-term synaptic potentiation. Binds PTPRZ1, leading to neutralization of the negative charges of the CS chains of PTPRZ1, inducing PTPRZ1 clustering, thereby causing the dimerization and inactivation of its phosphatase activity leading to increased tyrosine phosphorylation of each of the PTPRZ1 substrates like ALK, CTNNB1 or AFAP1L2 in order to activate the PI3K-AKT pathway. Through PTPRZ1 binding controls oligodendrocyte precursor cell differentiation by enhancing the phosphorylation of AFAP1L2 in order to activate the PI3K-AKT pathway. Forms a complex with PTPRZ1 and integrin alpha-V/beta-3 (ITGAV:ITGB3) that stimulates endothelial cell migration through SRC dephosphorylation and activation that consequently leads to ITGB3 'Tyr-773' phosphorylation. In adult hippocampus promotes dendritic arborization, spine development, and functional integration and connectivity of newborn granule neurons through ALK by activating AKT signaling pathway. Binds GPC2 and chondroitin sulfate proteoglycans (CSPGs) at the neuron surface, leading to abrogation of binding between PTPRS and CSPGs and neurite outgrowth promotion. Binds SDC3 and mediates bone formation by recruiting and attaching osteoblasts/osteoblast precursors to the sites for new bone deposition. Binds ALK and promotes cell survival and cell proliferation through MAPK pathway activation. Inhibits proliferation and enhances differentiation of neural stem cells by inhibiting FGF2-induced fibroblast growth factor receptor signaling pathway. Mediates regulatory mechanisms in normal hemostasis and in hematopoietic regeneration and in maintaining the balance of myeloid and lymphoid regeneration. In addition may play a role in the female reproductive system, auditory response and the progesterone-induced decidualization pathway. The chain is Pleiotrophin from Sus scrofa (Pig).